The following is a 252-amino-acid chain: Cyclic di-GMP binding protein VCA0042 (252 aa).

Basic and acidic residues predominate over residues 1–11; the sequence is MNSRPAEKIDN. The interval 1 to 24 is disordered; sequence MNSRPAEKIDNNDGQTETPRSKTV. A compositionally biased stretch (polar residues) spans 12–24; the sequence is NDGQTETPRSKTV. Residues 134-233 enclose the PilZ domain; the sequence is QLRKEPRFEL…EEGRNNAKNL (100 aa).

It belongs to the YcgR family. Dimer.

It is found in the bacterial flagellum basal body. In terms of biological role, may act as a flagellar brake, regulating swimming and swarming in a bis-(3'-5') cyclic diguanylic acid (c-di-GMP)-dependent manner. Increasing levels of c-di-GMP lead to decreased motility (Potential). Binds bis-(3'-5') cyclic diguanylic acid (c-di-GMP) with a dissociation constant of 170 nM in the presence of 10 mM KCl and with 100 nM in its absence. Binds 1 to 2 c-di-GMP per subunit. Only 1 c-di-GMP is seen in the wild-type crystal, while 2 are seen in the mutant. Depending on the concentration of K(+) stoichiometries of 1:1, 1.43:1 and 2:1 are determined by isothermal titration calorimetry. The polypeptide is Cyclic di-GMP binding protein VCA0042 (Vibrio cholerae serotype O1 (strain ATCC 39315 / El Tor Inaba N16961)).